A 333-amino-acid chain; its full sequence is Glyceraldehyde-3-phosphate dehydrogenase (333 aa).

At Ser1 the chain carries N-acetylserine. Residues 10 to 11 (RI), Asp31, and Met76 contribute to the NAD(+) site. D-glyceraldehyde 3-phosphate-binding positions include 147 to 149 (SCT), Thr178, 207 to 208 (TG), and Arg230. The active-site Nucleophile is the Cys148. An NAD(+)-binding site is contributed by Asn312.

The protein belongs to the glyceraldehyde-3-phosphate dehydrogenase family. In terms of assembly, homotetramer.

It is found in the cytoplasm. It catalyses the reaction D-glyceraldehyde 3-phosphate + phosphate + NAD(+) = (2R)-3-phospho-glyceroyl phosphate + NADH + H(+). Its pathway is carbohydrate degradation; glycolysis; pyruvate from D-glyceraldehyde 3-phosphate: step 1/5. The protein is Glyceraldehyde-3-phosphate dehydrogenase of Panulirus versicolor (Painted spiny lobster).